The following is a 270-amino-acid chain: Small ribosomal subunit protein uS3 (270 aa).

Residues 38-106 enclose the KH type-2 domain; that stretch reads IRQMLTRGME…QVQLNILEVK (69 aa). Residues 212-270 are disordered; the sequence is EREAAQAAQRAAGPQRRERPGRRRRGGGGGGGQQQQQAEKATAQATEAAKAAKSGNEGS. 2 stretches are compositionally biased toward low complexity: residues 216-225 and 245-263; these read AQAAQRAAGP and QQQQ…AKAA.

It belongs to the universal ribosomal protein uS3 family. In terms of assembly, part of the 30S ribosomal subunit. Forms a tight complex with proteins S10 and S14.

Functionally, binds the lower part of the 30S subunit head. Binds mRNA in the 70S ribosome, positioning it for translation. The chain is Small ribosomal subunit protein uS3 from Thermobifida fusca (strain YX).